Consider the following 380-residue polypeptide: Autophagy protein 5 (380 aa).

Residue K138 forms a Glycyl lysine isopeptide (Lys-Gly) (interchain with G-Cter in ATG12) linkage. Positions 194 to 203 are enriched in polar residues; sequence TSSVEGQQGS. Disordered regions lie at residues 194–214 and 283–309; these read TSSV…SGKP and RIPD…TPRS.

Belongs to the ATG5 family. As to quaternary structure, conjugated to ATG12. Conjugated to ATG12; which is essential for autophagy.

The protein resides in the cytoplasm. Functionally, required for autophagy. Conjugation to ATG12 is essential for plant nutrient recycling. In Oryza sativa subsp. japonica (Rice), this protein is Autophagy protein 5 (ATG5).